The primary structure comprises 966 residues: SH3 domain-binding protein 4 (966 aa).

The SH3 1 domain occupies 57-116; sequence GAAREVVAIKDCCPSSFTTLKFSKGDRLYVLDSSGAEWWYAHNNTEMGYIPAAYVEPINY. A ZU5 domain is found at 322–457; the sequence is TNIVCRLDSS…LEPCMYVCVV (136 aa). Positions 657–727 constitute an SH3 2 domain; sequence NNLKFGKLIK…HAKNVLVVGK (71 aa).

As to quaternary structure, homodimer or homooligomer.

It localises to the membrane. The protein localises to the clathrin-coated pit. It is found in the cytoplasmic vesicle. The protein resides in the clathrin-coated vesicle. Its subcellular location is the nucleus. In terms of biological role, possible role in regulating endocytosis of the transferrin receptor at the plasma membrane. Alternatively, may function as a negative regulator of the amino acid-induced TOR signaling by inhibiting the formation of active Rag GTPase complexes. Preferentially binds inactive Rag GTPase complexes and prevents their interaction with the mTORC1 complex inhibiting its relocalization to lysosomes and its activation. Thereby, may indirectly regulate cell growth, proliferation and autophagy. In Seriola quinqueradiata (Five-ray yellowtail), this protein is SH3 domain-binding protein 4 (sh3bp4).